Reading from the N-terminus, the 173-residue chain is Alpha-crystallin A chain (173 aa).

M1 is subject to N-acetylmethionine. Residues 1 to 63 (MDVTIQHPWF…RTVLDSGVSE (63 aa)) form a required for complex formation with BFSP1 and BFSP2 region. Deamidated glutamine; partial is present on Q6. S45 is modified (phosphoserine). Position 50 is a deamidated glutamine; partial (Q50). The sHSP domain occupies 52-162 (LFRTVLDSGV…GHSERAIPVS (111 aa)). At K70 the chain carries N6-acetyllysine. Q90 is modified (deamidated glutamine; partial). N6-acetyllysine is present on K99. H100 is a Zn(2+) binding site. Position 101 is a deamidated asparagine; partial (N101). Zn(2+) contacts are provided by E102 and H107. S122 bears the Phosphoserine mark. Position 123 is a deamidated asparagine; partial (N123). The tract at residues 144-173 (PKVQSGLDAGHSERAIPVSREEKPSSAPSS) is disordered. Q147 bears the Deamidated glutamine; partial mark. Residues 153-167 (GHSERAIPVSREEKP) show a composition bias toward basic and acidic residues. A Zn(2+)-binding site is contributed by H154. S162 is a glycosylation site (O-linked (GlcNAc) serine).

It belongs to the small heat shock protein (HSP20) family. Heteromer composed of three CRYAA and one CRYAB subunits. Inter-subunit bridging via zinc ions enhances stability, which is crucial as there is no protein turn over in the lens. Can also form homodimers and homotetramers (dimers of dimers) which serve as the building blocks of homooligomers. Within homooligomers, the zinc-binding motif is created from residues of 3 different molecules. His-100 and Glu-102 from one molecule are ligands of the zinc ion, and His-107 and His-154 residues from additional molecules complete the site with tetrahedral coordination geometry. Part of a complex required for lens intermediate filament formation composed of BFSP1, BFSP2 and CRYAA. Acetylation at Lys-70 may increase chaperone activity. Post-translationally, undergoes age-dependent proteolytical cleavage at the C-terminus.

Its subcellular location is the cytoplasm. It is found in the nucleus. Its function is as follows. Contributes to the transparency and refractive index of the lens. Acts as a chaperone, preventing aggregation of various proteins under a wide range of stress conditions. Required for the correct formation of lens intermediate filaments as part of a complex composed of BFSP1, BFSP2 and CRYAA. In Otolemur crassicaudatus (Brown greater galago), this protein is Alpha-crystallin A chain (CRYAA).